The primary structure comprises 365 residues: Spermidine-binding periplasmic protein SpuE (365 aa).

The signal sequence occupies residues 1–24; sequence MQHSIGKTLLVAALATAIAGPVQA. Thr-35, Glu-181, Asp-242, and Asn-269 together coordinate spermidine.

The protein belongs to the bacterial solute-binding protein PotD/PotF family.

It is found in the periplasm. Its function is as follows. Spermidine-binding protein probably required for its uptake into cells. Binds spermidine with high affinity (KD=14.3 nM). Does not bind putrescine, cadaverine or spermine. Spermidine binding induces large inter-domain conformational changes. Implicated in induction of type 3 secretion systems (T3SS), which play a role in virulence. This Pseudomonas aeruginosa (strain ATCC 15692 / DSM 22644 / CIP 104116 / JCM 14847 / LMG 12228 / 1C / PRS 101 / PAO1) protein is Spermidine-binding periplasmic protein SpuE (spuE).